A 96-amino-acid polypeptide reads, in one-letter code: ITLLNVSKLNLLRLALGGHVGRFCIWTESSFRKLDDLYGTWRKSAKLKADYNLPMHKMTNTDLTRILKSQEIQRALRAPNKKVKRRELKKNPLKNL.

A disordered region spans residues 77–96 (RAPNKKVKRRELKKNPLKNL). Basic residues predominate over residues 79–96 (PNKKVKRRELKKNPLKNL).

The protein belongs to the universal ribosomal protein uL4 family. In terms of assembly, component of the large ribosomal subunit.

It is found in the cytoplasm. Functionally, component of the large ribosomal subunit. The ribosome is a large ribonucleoprotein complex responsible for the synthesis of proteins in the cell. In Xenopus tropicalis (Western clawed frog), this protein is Large ribosomal subunit protein uL4 (rpl4).